The following is an 83-amino-acid chain: Gas vesicle protein G (83 aa).

The protein belongs to the gas vesicle GvpG family. GvpF to GvpM interact with each other in vitro, and may form multi-subunit complex(es).

Its subcellular location is the gas vesicle. Functionally, proteins GvpF to GvpM might be involved in nucleating gas vesicle formation. A minor component of the gas vesicle. Gas vesicles are hollow, gas filled proteinaceous nanostructures found in some microorganisms. They allow positioning of halobacteria at the optimal depth for growth in the poorly aerated, shallow brine pools of their habitat. Its function is as follows. Expression of a 9.5 kb mc-vac DNA fragment containing 2 divergently transcribed regions (gvpD-gvpE-gvpF-gvpG-gvpH-gvpI-gvpJ-gvpK-gvpL-gvpM and gvpA-gvpC-gvpN-gvpO) allows H.volcanii to produce gas vesicles. The protein is Gas vesicle protein G of Haloferax mediterranei (strain ATCC 33500 / DSM 1411 / JCM 8866 / NBRC 14739 / NCIMB 2177 / R-4) (Halobacterium mediterranei).